Consider the following 212-residue polypeptide: uncharacterized protein (212 aa).

4 consecutive transmembrane segments (helical) span residues 34–54, 59–79, 126–146, and 171–191; these read IFGIVLVILSLPSALPIPAPG, FGVLIFLVAIQLMAGRQELWL, ILMGITVGSMAISMMIPIPGT, and AGMIFSVLIGVLMVSVIYVFF.

This sequence to R.meliloti ExoD.

The protein resides in the cell membrane. This is an uncharacterized protein from Synechocystis sp. (strain ATCC 27184 / PCC 6803 / Kazusa).